Reading from the N-terminus, the 67-residue chain is Large ribosomal subunit protein bL35 (67 aa).

It belongs to the bacterial ribosomal protein bL35 family.

The polypeptide is Large ribosomal subunit protein bL35 (Paramagnetospirillum magneticum (strain ATCC 700264 / AMB-1) (Magnetospirillum magneticum)).